The sequence spans 256 residues: tRNA (guanine-N(7)-)-methyltransferase (256 aa).

Positions 1–25 (MVATGGQAQDQSQNQEPDVLNPTSA) are disordered. Residues Gly79, 102 to 103 (EI), 137 to 138 (NA), and Leu157 each bind S-adenosyl-L-methionine. Residue Asp160 is part of the active site. 235 to 237 (SEE) is an S-adenosyl-L-methionine binding site.

Belongs to the class I-like SAM-binding methyltransferase superfamily. TrmB family.

Its subcellular location is the nucleus. The catalysed reaction is guanosine(46) in tRNA + S-adenosyl-L-methionine = N(7)-methylguanosine(46) in tRNA + S-adenosyl-L-homocysteine. It participates in tRNA modification; N(7)-methylguanine-tRNA biosynthesis. Catalyzes the formation of N(7)-methylguanine at position 46 (m7G46) in tRNA. This is tRNA (guanine-N(7)-)-methyltransferase from Drosophila simulans (Fruit fly).